Reading from the N-terminus, the 313-residue chain is MASLCQRQQHCVKASIASEWQLAEAQDQLCGLELHSSESVEQERARALASSTELSHTEHQWRLKERMLGTLCPEANRDVFDKSIINITQSWPNESDPDKSLNFVQRNEELLKHFGMLGRWDDSQRFLAEYHHLICEETANYLILWCFRLQAEKKEALMEQVAHQAVVMQFILEMARNTQQDPRGCFRHFFQKAKAGQEGYLDVFHTELQAFKDRVKEYTMKSTGETPKDTVHQNTPPACCLDPKEVFESLPQELKTCIQMQDMQILQNVLSSMNPQVAEYHVKRCLEAGLWTNIPRTSKDESSEVDEWKMMET.

Belongs to the CDC37 family. Forms complexes with Hsp70 and Hsp90.

The protein resides in the cytoplasm. Its function is as follows. Co-chaperone that binds to numerous proteins and promotes their interaction with Hsp70 and Hsp90. The sequence is that of Hsp90 co-chaperone Cdc37-like 1 (cdc37l1) from Danio rerio (Zebrafish).